The following is a 608-amino-acid chain: Threonine--tRNA ligase (608 aa).

The segment at 1-145 (MKTLLIHAKH…TIKPGRRVRP (145 aa)) is editing domain. Catalytic stretches follow at residues 192 to 489 (PKYL…PSLP) and 193 to 489 (KYLE…PSLP). Zn(2+) is bound by residues Cys-286, His-337, and His-458.

It belongs to the class-II aminoacyl-tRNA synthetase family. As to quaternary structure, homodimer. Zn(2+) serves as cofactor.

The protein localises to the cytoplasm. The catalysed reaction is tRNA(Thr) + L-threonine + ATP = L-threonyl-tRNA(Thr) + AMP + diphosphate + H(+). Its function is as follows. Catalyzes the attachment of threonine to tRNA(Thr) in a two-step reaction: L-threonine is first activated by ATP to form Thr-AMP and then transferred to the acceptor end of tRNA(Thr). Also edits incorrectly charged L-seryl-tRNA(Thr). In Thermofilum pendens (strain DSM 2475 / Hrk 5), this protein is Threonine--tRNA ligase.